The primary structure comprises 184 residues: Ribosome-recycling factor (184 aa).

A disordered region spans residues 141–164 (DEKNGDITEDDLRSQTEDVQKATD).

This sequence belongs to the RRF family.

It is found in the cytoplasm. Functionally, responsible for the release of ribosomes from messenger RNA at the termination of protein biosynthesis. May increase the efficiency of translation by recycling ribosomes from one round of translation to another. The sequence is that of Ribosome-recycling factor from Staphylococcus haemolyticus (strain JCSC1435).